The primary structure comprises 316 residues: HTH-type transcriptional regulator PecT (316 aa).

Residues 11–68 (LDLDLLRTFVAVADLNTFAAAAVAVCRTQSAVSQQMQRLEQLIGKELFARHGRNKLLT) enclose the HTH lysR-type domain. Positions 28 to 47 (FAAAAVAVCRTQSAVSQQMQ) form a DNA-binding region, H-T-H motif. Residues 293–316 (LPVSTGTESELREPPTDESLKDIT) form a disordered region. Basic and acidic residues predominate over residues 301-316 (SELREPPTDESLKDIT).

The protein belongs to the LysR transcriptional regulatory family.

Its function is as follows. Regulates pectinase gene expression. The protein is HTH-type transcriptional regulator PecT (pecT) of Dickeya dadantii (strain 3937) (Erwinia chrysanthemi (strain 3937)).